Here is a 99-residue protein sequence, read N- to C-terminus: Transmembrane protein 14A (99 aa).

3 helical membrane passes run 1-21 (MDLI…LGYK), 24-44 (GGVP…YGAY), and 79-99 (PAGL…LLLL).

Belongs to the TMEM14 family.

The protein localises to the mitochondrion membrane. Its subcellular location is the endoplasmic reticulum membrane. Inhibits apoptosis via negative regulation of the mitochondrial outer membrane permeabilization involved in apoptotic signaling pathway. This is Transmembrane protein 14A (Tmem14a) from Mus musculus (Mouse).